A 729-amino-acid polypeptide reads, in one-letter code: Polyribonucleotide nucleotidyltransferase (729 aa).

Residues Asp-485 and Asp-491 each contribute to the Mg(2+) site. Residues 552 to 611 (PRITTMKVAEDKIRTIIGKGGATIKGLIESTGVSIDIDDSGVVQLFSPDKMALEEAQKQI) enclose the KH domain. Residues 621-689 (GQTYQGKVSK…KQGRVKLEWK (69 aa)) enclose the S1 motif domain.

The protein belongs to the polyribonucleotide nucleotidyltransferase family. Component of the RNA degradosome, which is a multiprotein complex involved in RNA processing and mRNA degradation. Mg(2+) is required as a cofactor.

It is found in the cytoplasm. It catalyses the reaction RNA(n+1) + phosphate = RNA(n) + a ribonucleoside 5'-diphosphate. Functionally, involved in mRNA degradation. Catalyzes the phosphorolysis of single-stranded polyribonucleotides processively in the 3'- to 5'-direction. The sequence is that of Polyribonucleotide nucleotidyltransferase from Legionella pneumophila subsp. pneumophila (strain Philadelphia 1 / ATCC 33152 / DSM 7513).